We begin with the raw amino-acid sequence, 289 residues long: Protoheme IX farnesyltransferase (289 aa).

The next 9 helical transmembrane spans lie at 9-29 (VALM…PVMM), 40-60 (LIAV…TINC), 89-109 (LTFG…LVNW), 110-130 (PSAL…TLGL), 134-154 (TPSN…IGWS), 155-175 (AVTG…FFWT), 190-209 (YAAA…VVTR), 228-248 (VAST…WFLV), and 269-289 (FHMS…TALV).

The protein belongs to the UbiA prenyltransferase family. Protoheme IX farnesyltransferase subfamily.

It localises to the cell membrane. The catalysed reaction is heme b + (2E,6E)-farnesyl diphosphate + H2O = Fe(II)-heme o + diphosphate. Its pathway is porphyrin-containing compound metabolism; heme O biosynthesis; heme O from protoheme: step 1/1. Its function is as follows. Converts heme B (protoheme IX) to heme O by substitution of the vinyl group on carbon 2 of heme B porphyrin ring with a hydroxyethyl farnesyl side group. This chain is Protoheme IX farnesyltransferase, found in Frankia casuarinae (strain DSM 45818 / CECT 9043 / HFP020203 / CcI3).